The primary structure comprises 680 residues: DNA-directed RNA polymerase subunit beta' (680 aa).

The Zn(2+) site is built by Cys69, Cys71, Cys87, and Cys90. Asp489, Asp491, and Asp493 together coordinate Mg(2+).

It belongs to the RNA polymerase beta' chain family. RpoC1 subfamily. As to quaternary structure, in plastids the minimal PEP RNA polymerase catalytic core is composed of four subunits: alpha, beta, beta', and beta''. When a (nuclear-encoded) sigma factor is associated with the core the holoenzyme is formed, which can initiate transcription. Requires Mg(2+) as cofactor. Zn(2+) is required as a cofactor.

Its subcellular location is the plastid. The protein resides in the chloroplast. The enzyme catalyses RNA(n) + a ribonucleoside 5'-triphosphate = RNA(n+1) + diphosphate. In terms of biological role, DNA-dependent RNA polymerase catalyzes the transcription of DNA into RNA using the four ribonucleoside triphosphates as substrates. The protein is DNA-directed RNA polymerase subunit beta' of Manihot esculenta (Cassava).